The chain runs to 519 residues: ATP synthase subunit beta, mitochondrial (519 aa).

A mitochondrion-targeting transit peptide spans Met1 to Ala21. ATP contacts are provided by residues Gly184 to Val191 and Arg216.

It belongs to the ATPase alpha/beta chains family. In terms of assembly, F-type ATPases have 2 components, F(1) - the catalytic core - and F(o) - the membrane proton channel. F(1) has five subunits: alpha(3), beta(3), gamma(1), delta(1), epsilon(1), plus the additional subunit P18 (Tb427.05.1710) that is not present in F(1)F(o) ATP synthase from metazoa. Subunit P18 (Tb927.5.1710) interacts with the alpha subunit with a 1:1 stoichiometry; the interaction is direct. Subunit gamma is part of the central stalk. F(o) has three main subunits: a, b and c. The trypanosomal ATPase complex contains additional subunits that are not present in the F(1)F(o) ATP synthase from metazoa.

The protein localises to the mitochondrion. Its subcellular location is the mitochondrion inner membrane. The enzyme catalyses ATP + H2O + 4 H(+)(in) = ADP + phosphate + 5 H(+)(out). Functionally, mitochondrial membrane ATP synthase (F(1)F(o) ATP synthase) produces ATP from ADP in the presence of a proton gradient across the membrane which is generated by electron transport complexes of the respiratory chain. F-type ATPases consist of two structural domains, F(1) - containing the extramembraneous catalytic core, and F(o) - containing the membrane proton channel, linked together by a central stalk and a peripheral stalk. During catalysis, ATP synthesis in the catalytic domain of F(1) is coupled via a rotary mechanism of the central stalk subunits to proton translocation. Subunits alpha and beta form the catalytic core in F(1). Rotation of the central stalk against the surrounding alpha(3)beta(3) subunits leads to hydrolysis of ATP in three separate catalytic sites on the beta subunits. Contrary to the procyclic, insect form that requires F(1)F(o) ATP synthase for ATP synthesis, the bloodstream form relies on ATP hydrolysis by F(1)F(o) ATP synthase to maintain its mitochondrial membrane potential. The chain is ATP synthase subunit beta, mitochondrial from Trypanosoma brucei brucei.